The chain runs to 138 residues: Pleckstrin homology-like domain family A member 2 (138 aa).

In terms of domain architecture, PH spans 11 to 105 (VLKEGELEKR…WNAVITMALI (95 aa)). Residues 117–138 (KTRQDDESGSPGQHESRMARAP) are disordered.

It belongs to the PHLDA2 family.

Its subcellular location is the cytoplasm. The protein localises to the membrane. In terms of biological role, plays a role in regulating placenta growth. May act via its PH domain that competes with other PH domain-containing proteins, thereby preventing their binding to membrane lipids. This is Pleckstrin homology-like domain family A member 2 (phlda2) from Salmo salar (Atlantic salmon).